The following is a 233-amino-acid chain: Ribonuclease 3 (233 aa).

The RNase III domain occupies 9 to 136 (LQHFWEQFHL…IIGSVYLSGG (128 aa)). E49 contributes to the Mg(2+) binding site. D53 is a catalytic residue. 2 residues coordinate Mg(2+): D122 and E125. The active site involves E125. Positions 162–231 (DSKSALQEFV…ARAALALLKV (70 aa)) constitute a DRBM domain.

The protein belongs to the ribonuclease III family. Homodimer. The cofactor is Mg(2+).

The protein resides in the cytoplasm. The enzyme catalyses Endonucleolytic cleavage to 5'-phosphomonoester.. Digests double-stranded RNA. Involved in the processing of primary rRNA transcript to yield the immediate precursors to the large and small rRNAs (23S and 16S). Processes some mRNAs, and tRNAs when they are encoded in the rRNA operon. Processes pre-crRNA and tracrRNA of type II CRISPR loci if present in the organism. The polypeptide is Ribonuclease 3 (Moorella thermoacetica (strain ATCC 39073 / JCM 9320)).